An 859-amino-acid chain; its full sequence is Probable potassium transporter 14 (859 aa).

Over residues 1–19 (METRSGGSGSASGGGGGGR) the composition is skewed to gly residues. The interval 1 to 69 (METRSGGSGS…SRGGCSDSDD (69 aa)) is disordered. Topologically, residues 1-112 (METRSGGSGS…RHQEITVGRS (112 aa)) are cytoplasmic. Residues 54-65 (PAAASGSRGGCS) show a composition bias toward low complexity. The helical transmembrane segment at 113–133 (IVLAVQTLGVVFGDVGTSPLY) threads the bilayer. Residues 134 to 155 (AFDVMFNKYPITSKEDVLGALS) lie on the Extracellular side of the membrane. Residues 156-176 (LVIYTLILIPLLKYTLIALWG) form a helical membrane-spanning segment. Topologically, residues 177 to 240 (NDDGEGGTFA…RLETSSMLKK (64 aa)) are cytoplasmic. A helical membrane pass occupies residues 241-261 (LLLMLVLFGTSMVIADGVVTP). The Extracellular portion of the chain corresponds to 262-275 (AMSVMSAVNGLKVG). A helical membrane pass occupies residues 276-296 (ISSVNEGEVVMITVAVLIVLF). Topologically, residues 297-305 (TLQRFGSSK) are cytoplasmic. Residues 306–326 (VALAVGPALFIWFCCLAGIGI) form a helical membrane-spanning segment. The Extracellular portion of the chain corresponds to 327–359 (YNMKTYGSAVLQAFNPMYIYYYFERNPTQAWMS). The helical transmembrane segment at 360–380 (LGGCLLCATGSEAMFADLCYF) threads the bilayer. Over 381–388 (SVKSVQLT) the chain is Cytoplasmic. A helical membrane pass occupies residues 389-409 (FVFLVLPCLLLGYLGQAAFLM). The Extracellular portion of the chain corresponds to 410–417 (ENLTENQQ). The N-linked (GlcNAc...) asparagine glycan is linked to asparagine 411. Residues 418–438 (VFFLSIPNQAFWPVVFIAILA) form a helical membrane-spanning segment. Topologically, residues 439-478 (AIIASRTMTTAIFSTIKQATALGCFPRLKIIHTSRSFMGQ) are cytoplasmic. Residues 479–499 (IYIPMMNWFLLVSCLAFVTMF) traverse the membrane as a helical segment. Residues 500 to 508 (GSINEIGNA) are Extracellular-facing. A helical transmembrane segment spans residues 509 to 531 (YGIAELGVMMMTTVLVTIIMLLI). Residues 532–535 (WQIN) lie on the Cytoplasmic side of the membrane. The chain crosses the membrane as a helical span at residues 536–558 (IIVVLCFLTLSLGLELIFFSSVL). Over 559–560 (GS) the chain is Extracellular. A helical transmembrane segment spans residues 561–581 (VADGSWVLLVFAAVLYLIMYI). Over 582–859 (WNYGTKLKYE…MMQVAMQYMV (278 aa)) the chain is Cytoplasmic. The disordered stretch occupies residues 752 to 772 (GVPPAEAAGTTEHPTIGSSMS). The span at 763 to 772 (EHPTIGSSMS) shows a compositional bias: polar residues.

Belongs to the HAK/KUP transporter (TC 2.A.72.3) family.

The protein localises to the membrane. Its function is as follows. High-affinity potassium transporter. The sequence is that of Probable potassium transporter 14 (HAK14) from Oryza sativa subsp. japonica (Rice).